Reading from the N-terminus, the 163-residue chain is Nucleotide-binding protein BC_1159 (163 aa).

It belongs to the YajQ family.

In terms of biological role, nucleotide-binding protein. The polypeptide is Nucleotide-binding protein BC_1159 (Bacillus cereus (strain ATCC 14579 / DSM 31 / CCUG 7414 / JCM 2152 / NBRC 15305 / NCIMB 9373 / NCTC 2599 / NRRL B-3711)).